We begin with the raw amino-acid sequence, 367 residues long: Phosphoribosylaminoimidazole-succinocarboxamide synthase (367 aa).

The protein belongs to the SAICAR synthetase family.

The enzyme catalyses 5-amino-1-(5-phospho-D-ribosyl)imidazole-4-carboxylate + L-aspartate + ATP = (2S)-2-[5-amino-1-(5-phospho-beta-D-ribosyl)imidazole-4-carboxamido]succinate + ADP + phosphate + 2 H(+). The protein operates within purine metabolism; IMP biosynthesis via de novo pathway; 5-amino-1-(5-phospho-D-ribosyl)imidazole-4-carboxamide from 5-amino-1-(5-phospho-D-ribosyl)imidazole-4-carboxylate: step 1/2. The polypeptide is Phosphoribosylaminoimidazole-succinocarboxamide synthase (Shewanella baltica (strain OS195)).